The following is a 399-amino-acid chain: Tryptophan synthase beta chain (399 aa).

Lys-92 bears the N6-(pyridoxal phosphate)lysine mark.

This sequence belongs to the TrpB family. Tetramer of two alpha and two beta chains. Requires pyridoxal 5'-phosphate as cofactor.

The catalysed reaction is (1S,2R)-1-C-(indol-3-yl)glycerol 3-phosphate + L-serine = D-glyceraldehyde 3-phosphate + L-tryptophan + H2O. The protein operates within amino-acid biosynthesis; L-tryptophan biosynthesis; L-tryptophan from chorismate: step 5/5. The beta subunit is responsible for the synthesis of L-tryptophan from indole and L-serine. In Legionella pneumophila (strain Paris), this protein is Tryptophan synthase beta chain.